We begin with the raw amino-acid sequence, 281 residues long: Probable ABC transporter ATP-binding protein AZC_3926 (281 aa).

The tract at residues 1–38 (MNVLSMFGRNATRETSSPAATAGRYADEGDWEGDDHQP) is disordered. The 233-residue stretch at 45–277 (LAAFGLAKSY…PDVRRLYLGE (233 aa)) folds into the ABC transporter domain. 77–84 (GPNGAGKT) contributes to the ATP binding site.

It belongs to the ABC transporter superfamily.

This Azorhizobium caulinodans (strain ATCC 43989 / DSM 5975 / JCM 20966 / LMG 6465 / NBRC 14845 / NCIMB 13405 / ORS 571) protein is Probable ABC transporter ATP-binding protein AZC_3926.